Reading from the N-terminus, the 38-residue chain is Allatostatin-C (38 aa).

A propeptide spanning residues 1–19 (MRRALDGPGSSSLDTRQAD) is cleaved from the precursor. Pyrrolidone carboxylic acid; partial is present on Gln-22.

It belongs to the allatostatin family. In terms of tissue distribution, in its non-pyroglutamate form, expressed in antennal lobe (AL), corpora cardiaca (CC), corpora allata (CA) and gnathal ganglion (GNG) with expression in AL detected in most animals and expression in CC, CA and GNG detected in few animals (at protein level). In its pyroglutamate form, expressed in antennal lobe (AL), corpora cardiaca (CC) and corpora allata (CA) with expression detected in few animals (at protein level). Not expressed in GNG (protein level).

It is found in the secreted. Its function is as follows. Strongly inhibits juvenile hormone biosynthesis. The chain is Allatostatin-C from Agrotis ipsilon (Black cutworm moth).